The chain runs to 384 residues: Odorant receptor 33c (384 aa).

The Cytoplasmic portion of the chain corresponds to 1 to 35 (MVIIDSLSFYRPFWICMRLLVPTFFKDSSRPVQLY). Residues 36–56 (VVLLHILVTLWFPLHLLLHLL) form a helical membrane-spanning segment. The Extracellular portion of the chain corresponds to 57-63 (LLPSTAE). Residues 64 to 84 (FFKNLTMSLTCVACSLKHVAH) form a helical membrane-spanning segment. Residues 85-128 (LYHLPQIVEIESLIEQLDTFIASEQEHRYYRDHVHCHARRFTRC) are Cytoplasmic-facing. Residues 129–149 (LYISFGMIYALFLFGVFVQVI) traverse the membrane as a helical segment. Residues 150–169 (SGNWELLYPAYFPFDLESNR) are Extracellular-facing. Residues 170–190 (FLGAVALGYQVFSMLVEGFQG) form a helical membrane-spanning segment. The Cytoplasmic segment spans residues 191–251 (LGNDTYTPLT…LVRFHNLVSR (61 aa)). A helical membrane pass occupies residues 252–272 (TISEVQLVQLGGCGATLCIIV). The Extracellular portion of the chain corresponds to 273–274 (SY). Residues 275 to 295 (MLFFVGDTISLVYYLVFFGVV) form a helical membrane-spanning segment. Topologically, residues 296 to 358 (CVQLFPSCYF…WIIKAGGLIE (63 aa)) are cytoplasmic. A helical transmembrane segment spans residues 359–379 (LNLNAFFATLKMAYSLFAVVV). At 380–384 (RAKGI) the chain is on the extracellular side.

This sequence belongs to the insect chemoreceptor superfamily. Heteromeric odorant receptor channel (TC 1.A.69) family. Or2a subfamily. As to quaternary structure, interacts with Orco. Complexes exist early in the endomembrane system in olfactory sensory neurons (OSNs), coupling these complexes to the conserved ciliary trafficking pathway. Expressed in the antenna and in a subset of 18 olfactory receptor neurons in the maxillary palp.

The protein localises to the cell membrane. Functionally, odorant receptor which mediates acceptance or avoidance behavior, depending on its substrates. The odorant receptor repertoire encodes a large collection of odor stimuli that vary widely in identity, intensity, and duration. May form a complex with Orco to form odorant-sensing units, providing sensitive and prolonged odorant signaling and calcium permeability. The polypeptide is Odorant receptor 33c (Or33c) (Drosophila melanogaster (Fruit fly)).